The chain runs to 860 residues: Leucine--tRNA ligase (860 aa).

Positions 42–52 match the 'HIGH' region motif; it reads PYPSGRLHMGH. Positions 619-623 match the 'KMSKS' region motif; that stretch reads KMSKS. Position 622 (lysine 622) interacts with ATP.

Belongs to the class-I aminoacyl-tRNA synthetase family.

Its subcellular location is the cytoplasm. It catalyses the reaction tRNA(Leu) + L-leucine + ATP = L-leucyl-tRNA(Leu) + AMP + diphosphate. In Edwardsiella ictaluri (strain 93-146), this protein is Leucine--tRNA ligase.